Here is a 571-residue protein sequence, read N- to C-terminus: Methionine--tRNA ligase (571 aa).

The 'HIGH' region motif lies at 10–20 (PYVNAVPHLGN). Positions 143, 146, 156, and 159 each coordinate Zn(2+). The 'KMSKS' region motif lies at 333-337 (KFSKS). An ATP-binding site is contributed by K336.

Belongs to the class-I aminoacyl-tRNA synthetase family. MetG type 1 subfamily. Zn(2+) serves as cofactor.

It is found in the cytoplasm. It carries out the reaction tRNA(Met) + L-methionine + ATP = L-methionyl-tRNA(Met) + AMP + diphosphate. In terms of biological role, is required not only for elongation of protein synthesis but also for the initiation of all mRNA translation through initiator tRNA(fMet) aminoacylation. In Sulfurisphaera tokodaii (strain DSM 16993 / JCM 10545 / NBRC 100140 / 7) (Sulfolobus tokodaii), this protein is Methionine--tRNA ligase.